A 305-amino-acid polypeptide reads, in one-letter code: UPF0282 protein Pisl_0021 (305 aa).

It belongs to the UPF0282 family.

The chain is UPF0282 protein Pisl_0021 from Pyrobaculum islandicum (strain DSM 4184 / JCM 9189 / GEO3).